We begin with the raw amino-acid sequence, 316 residues long: Ribosomal RNA small subunit methyltransferase H (316 aa).

Residues 35–37, D55, F80, D102, and Q109 contribute to the S-adenosyl-L-methionine site; that span reads GGH.

Belongs to the methyltransferase superfamily. RsmH family.

It localises to the cytoplasm. It carries out the reaction cytidine(1402) in 16S rRNA + S-adenosyl-L-methionine = N(4)-methylcytidine(1402) in 16S rRNA + S-adenosyl-L-homocysteine + H(+). In terms of biological role, specifically methylates the N4 position of cytidine in position 1402 (C1402) of 16S rRNA. The protein is Ribosomal RNA small subunit methyltransferase H of Colwellia psychrerythraea (strain 34H / ATCC BAA-681) (Vibrio psychroerythus).